A 406-amino-acid chain; its full sequence is Ubiquitin-like modifier-activating enzyme 5 (406 aa).

ATP is bound by residues glycine 82, aspartate 103, lysine 126, asparagine 149, and asparagine 183. Zn(2+) contacts are provided by cysteine 225 and cysteine 228. Cysteine 249 acts as the Glycyl thioester intermediate in catalysis. Zn(2+)-binding residues include cysteine 302 and cysteine 307. Residues glutamate 373–aspartate 397 form a disordered region. The segment covering serine 378 to glutamate 393 has biased composition (low complexity).

The protein belongs to the ubiquitin-activating E1 family. UBA5 subfamily.

E1-like enzyme which activates UFM1. The protein is Ubiquitin-like modifier-activating enzyme 5 of Drosophila willistoni (Fruit fly).